We begin with the raw amino-acid sequence, 632 residues long: Phosphatidylinositol-3,5-bisphosphate 3-phosphatase MTMR8 (632 aa).

The 375-residue stretch at 126–500 (GWELISVVND…LHFKFWCGMY (375 aa)) folds into the Myotubularin phosphatase domain. Residues asparagine 250, asparagine 275, and isoleucine 276 each contribute to the a 1,2-diacyl-sn-glycero-3-phospho-(1D-myo-inositol-3,5-bisphosphate) site. Positions 250, 275, and 276 each coordinate a 1,2-diacyl-sn-glycero-3-phospho-(1D-myo-inositol-3-phosphate). The active-site Phosphocysteine intermediate is cysteine 338. 8 residues coordinate a 1,2-diacyl-sn-glycero-3-phospho-(1D-myo-inositol-3,5-bisphosphate): serine 339, aspartate 340, glycine 341, tryptophan 342, aspartate 343, arginine 344, lysine 380, and arginine 384. A 1,2-diacyl-sn-glycero-3-phospho-(1D-myo-inositol-3-phosphate)-binding residues include serine 339, aspartate 340, glycine 341, tryptophan 342, aspartate 343, and arginine 344. Serine 339 and aspartate 340 together coordinate phosphate. Tryptophan 342, aspartate 343, and arginine 344 together coordinate phosphate. Arginine 384 is a binding site for a 1,2-diacyl-sn-glycero-3-phospho-(1D-myo-inositol-3-phosphate). The disordered stretch occupies residues 545–632 (LPDPAGPINT…HSKEEVQESS (88 aa)). A compositionally biased stretch (basic and acidic residues) spans 602-632 (EPAANEHDLSSKDKPVFVETEHSKEEVQESS).

This sequence belongs to the protein-tyrosine phosphatase family. Non-receptor class myotubularin subfamily. Homodimer.

It is found in the nucleus envelope. It carries out the reaction a 1,2-diacyl-sn-glycero-3-phospho-(1D-myo-inositol-3,5-bisphosphate) + H2O = a 1,2-diacyl-sn-glycero-3-phospho-(1D-myo-inositol-5-phosphate) + phosphate. The enzyme catalyses a 1,2-diacyl-sn-glycero-3-phospho-(1D-myo-inositol-3-phosphate) + H2O = a 1,2-diacyl-sn-glycero-3-phospho-(1D-myo-inositol) + phosphate. It catalyses the reaction 1,2-dioctanoyl-sn-glycero-3-phospho-(1D-myo-inositol-3,5-bisphosphate) + H2O = 1,2-dioctanoyl-sn-glycero-3-phospho-(1D-myo-inositol-5-phosphate) + phosphate. Its function is as follows. Lipid phosphatase that specifically dephosphorylates the D-3 position of phosphatidylinositol 3-phosphate and phosphatidylinositol 3,5-bisphosphate, generating phosphatidylinositol and phosphatidylinositol 5-phosphate. The chain is Phosphatidylinositol-3,5-bisphosphate 3-phosphatase MTMR8 (mtmr8) from Danio rerio (Zebrafish).